The following is a 139-amino-acid chain: uncharacterized protein (139 aa).

The HTH cro/C1-type domain occupies 19–73; the sequence is IRLRRTMLGMSQEKLGESLGITFQQIQKYEKGTNRVGASRLQNISQILNVPVSFF. A DNA-binding region (H-T-H motif) is located at residues 30 to 49; that stretch reads QEKLGESLGITFQQIQKYEK.

This is an uncharacterized protein from Rhizobium meliloti (strain 1021) (Ensifer meliloti).